A 414-amino-acid polypeptide reads, in one-letter code: Arrestin domain-containing protein 3 (414 aa).

Short sequence motifs (PPxY motif) lie at residues 346 to 349 (PPSY) and 391 to 394 (PPLY). The segment at 393-414 (LYSEIDPNPDQPADDRPSCPSR) is disordered. Positions 405–414 (ADDRPSCPSR) are enriched in basic and acidic residues.

This sequence belongs to the arrestin family. In terms of assembly, interacts (via PPxY motifs) with NEDD4 (via WW domains). Interacts with ADRB2. Interacts with ADRB3. Interacts with HGS (via PPxY motifs). Does not bind TXN (thioredoxin). Interacts with ITCH.

It is found in the cytoplasm. Its subcellular location is the cell membrane. The protein localises to the lysosome. It localises to the endosome. The protein resides in the early endosome. Adapter protein that plays a role in regulating cell-surface expression of adrenergic receptors and probably also other G protein-coupled receptors. Plays a role in NEDD4-mediated ubiquitination and endocytosis af activated ADRB2 and subsequent ADRB2 degradation. May recruit NEDD4 to ADRB2. Alternatively, may function as adapter protein that does not play a major role in recruiting NEDD4 to ADRB2, but rather plays a role in a targeting ADRB2 to endosomes. The protein is Arrestin domain-containing protein 3 (ARRDC3) of Bos taurus (Bovine).